Reading from the N-terminus, the 141-residue chain is N,N-dimethylformamidase alpha subunit (141 aa).

In terms of assembly, heterotetramer of two DmfA1 (alpha) and two DmfA2 (beta) subunits.

It carries out the reaction N,N-dimethylformamide + H2O = dimethylamine + formate. In terms of biological role, hydrolyzes N,N-dimethylformamide, and to a lesser extent N,N-dimethylacetamide and N,N-diethylacetamide. Has no activity against the substituted amides N-methylformamide, N-ethylformamide, N-ethylformamide and N-methylacetamide or the unsubstituted amides formamide, nicotinamide, acetoamide, benzamide, acetamide and acrylamide. The chain is N,N-dimethylformamidase alpha subunit from Paracoccus aminophilus.